The primary structure comprises 212 residues: Guanylate kinase (212 aa).

Residues 7–187 (GLLIVLSGPS…AADRIIAIIR (181 aa)) enclose the Guanylate kinase-like domain. ATP is bound at residue 14-21 (GPSGVGKA).

Belongs to the guanylate kinase family.

The protein resides in the cytoplasm. The catalysed reaction is GMP + ATP = GDP + ADP. In terms of biological role, essential for recycling GMP and indirectly, cGMP. This chain is Guanylate kinase, found in Onion yellows phytoplasma (strain OY-M).